Here is a 581-residue protein sequence, read N- to C-terminus: Putative protein phosphatase 2C 22 (581 aa).

An N-terminal signal peptide occupies residues 1-21 (MVISVPLFSSVLLALVVAVPA). A PPM-type phosphatase domain is found at 102-478 (KYASSAMQGL…NNATAILVQF (377 aa)). Asp138, Gly139, Asp373, and Asn469 together coordinate Mn(2+). Residues 538–563 (SDEVAGGAAVAEQHQHNPEGGGEQQL) form a disordered region.

It belongs to the PP2C family. It depends on Mg(2+) as a cofactor. Requires Mn(2+) as cofactor.

It catalyses the reaction O-phospho-L-seryl-[protein] + H2O = L-seryl-[protein] + phosphate. It carries out the reaction O-phospho-L-threonyl-[protein] + H2O = L-threonyl-[protein] + phosphate. This chain is Putative protein phosphatase 2C 22, found in Oryza sativa subsp. japonica (Rice).